Consider the following 367-residue polypeptide: Nuclear hormone receptor-like 1 (367 aa).

Residues 32 to 107 (GQPCVVCGDD…NGMTKSLVLN (76 aa)) constitute a DNA-binding region (nuclear receptor). 2 NR C4-type zinc fingers span residues 35-55 (CVVC…CEGC) and 71-95 (CKSI…FQKC). The 223-residue stretch at 145-367 (EFQSRIDQVT…IANILLFKFT (223 aa)) folds into the NR LBD domain.

The protein belongs to the nuclear hormone receptor family.

The protein localises to the nucleus. The polypeptide is Nuclear hormone receptor-like 1 (nhr-1) (Onchocerca volvulus).